A 490-amino-acid chain; its full sequence is Betaine aldehyde dehydrogenase (490 aa).

Thr-26, Ile-27, and Asp-93 together coordinate K(+). 150-152 (GAW) lines the NAD(+) pocket. Lys-162 functions as the Charge relay system in the catalytic mechanism. Position 176–179 (176–179 (KPSE)) interacts with NAD(+). Val-180 contributes to the K(+) binding site. 230 to 233 (GVAS) provides a ligand contact to NAD(+). Leu-246 contacts K(+). Glu-252 serves as the catalytic Proton acceptor. NAD(+)-binding residues include Gly-254, Cys-286, and Glu-387. The active-site Nucleophile is the Cys-286. Cysteine sulfenic acid (-SOH) is present on Cys-286. Positions 457 and 460 each coordinate K(+). Glu-464 serves as the catalytic Charge relay system.

Belongs to the aldehyde dehydrogenase family. As to quaternary structure, dimer of dimers. The cofactor is K(+).

The enzyme catalyses betaine aldehyde + NAD(+) + H2O = glycine betaine + NADH + 2 H(+). It participates in amine and polyamine biosynthesis; betaine biosynthesis via choline pathway; betaine from betaine aldehyde: step 1/1. Its function is as follows. Involved in the biosynthesis of the osmoprotectant glycine betaine. Catalyzes the irreversible oxidation of betaine aldehyde to the corresponding acid. This chain is Betaine aldehyde dehydrogenase, found in Escherichia coli (strain SE11).